Here is a 163-residue protein sequence, read N- to C-terminus: MKVQIKRLHPEAMIPERQTKLASGFDLHVLDAVLPENASDPYYDHFEAIRIFPGERILVRTGIAIQMGEGMEAQVRPRSGLALRHGITLLNSPGTVDADYTGDVGVILINLGDKHVDIRKKDRVAQLVFQPVFHQVELEERESLNETERGDGGFGHTGVNSQP.

Substrate-binding positions include 78–80, Asn91, and 95–97; these read RSG and TVD. A compositionally biased stretch (basic and acidic residues) spans 140-151; sequence ERESLNETERGD. The interval 140-163 is disordered; sequence ERESLNETERGDGGFGHTGVNSQP.

This sequence belongs to the dUTPase family. It depends on Mg(2+) as a cofactor.

The enzyme catalyses dUTP + H2O = dUMP + diphosphate + H(+). The protein operates within pyrimidine metabolism; dUMP biosynthesis; dUMP from dCTP (dUTP route): step 2/2. Functionally, this enzyme is involved in nucleotide metabolism: it produces dUMP, the immediate precursor of thymidine nucleotides and it decreases the intracellular concentration of dUTP so that uracil cannot be incorporated into DNA. The chain is Deoxyuridine 5'-triphosphate nucleotidohydrolase from Heliobacterium modesticaldum (strain ATCC 51547 / Ice1).